The primary structure comprises 344 residues: L-threonine 3-dehydrogenase (344 aa).

Residue C38 coordinates Zn(2+). Active-site charge relay system residues include T40 and H43. Positions 63, 64, 93, 96, 99, and 107 each coordinate Zn(2+). NAD(+) contacts are provided by residues I175, D195, R200, 263–265, and 287–288; these read LGI and IY.

This sequence belongs to the zinc-containing alcohol dehydrogenase family. Homotetramer. It depends on Zn(2+) as a cofactor.

The protein resides in the cytoplasm. It carries out the reaction L-threonine + NAD(+) = (2S)-2-amino-3-oxobutanoate + NADH + H(+). It participates in amino-acid degradation; L-threonine degradation via oxydo-reductase pathway; glycine from L-threonine: step 1/2. Functionally, catalyzes the NAD(+)-dependent oxidation of L-threonine to 2-amino-3-ketobutyrate. This Deinococcus deserti (strain DSM 17065 / CIP 109153 / LMG 22923 / VCD115) protein is L-threonine 3-dehydrogenase.